The chain runs to 499 residues: Probable alpha-L-arabinofuranosidase B (499 aa).

The signal sequence occupies residues 1-18; the sequence is MFSRRNLVALGLAATVSA. Residues 19 to 335 are catalytic; it reads GPCDIYEAGD…ENIVAAKYVS (317 aa). Intrachain disulfides connect Cys-21–Cys-31, Cys-81–Cys-86, and Cys-176–Cys-177. N-linked (GlcNAc...) asparagine glycosylation is present at Asn-83. Asn-202 is a glycosylation site (N-linked (GlcNAc...) asparagine). Asp-219 contributes to the substrate binding site. Glu-221 serves as the catalytic Nucleophile. Substrate is bound by residues Asn-222, Asn-223, and Gly-296. Asp-297 (proton donor) is an active-site residue. An ABD region spans residues 336 to 499; the sequence is GSLVSGPSFT…SFEIETAFAS (164 aa). Cysteines 401 and 439 form a disulfide. Substrate is bound by residues His-416, Asn-418, Phe-419, Asp-435, His-463, Asp-465, Leu-468, and Asp-488.

This sequence belongs to the glycosyl hydrolase 54 family.

The protein localises to the secreted. It carries out the reaction Hydrolysis of terminal non-reducing alpha-L-arabinofuranoside residues in alpha-L-arabinosides.. It functions in the pathway glycan metabolism; L-arabinan degradation. Functionally, alpha-L-arabinofuranosidase involved in the degradation of arabinoxylan, a major component of plant hemicellulose. Able to hydrolyze 1,5-, 1,3- and 1,2-alpha-linkages not only in L-arabinofuranosyl oligosaccharides, but also in polysaccharides containing terminal non-reducing L-arabinofuranoses in side chains, like L-arabinan, arabinogalactan and arabinoxylan. This Aspergillus niger (strain ATCC MYA-4892 / CBS 513.88 / FGSC A1513) protein is Probable alpha-L-arabinofuranosidase B (abfB).